Consider the following 74-residue polypeptide: U3-agatoxin-Ao1b (74 aa).

Residues 1–20 (MKAAISLIIFFAILFVVIEA) form the signal peptide. Positions 21–34 (ISYEEGKELFQKER) are excised as a propeptide. 4 cysteine pairs are disulfide-bonded: C37–C53, C44–C58, C52–C68, and C60–C66. S72 is modified (serine amide).

This sequence belongs to the neurotoxin 07 (Beta/delta-agtx) family. 02 (aga-3) subfamily. Expressed by the venom gland.

The protein resides in the secreted. Its function is as follows. Insecticidal neurotoxin that induces an irreversible spastic paralysis when injected into insects. Modifies presynaptic voltage-gated sodium channels (Nav), causing them to open at the normal resting potential of the nerve. This leads to spontaneous release of neurotransmitter and repetitive action potentials in motor neurons. This chain is U3-agatoxin-Ao1b, found in Agelena orientalis (Funnel-web spider).